The chain runs to 498 residues: ATP synthase subunit beta, chloroplastic (498 aa).

Residue 172–179 (GGAGVGKT) participates in ATP binding.

Belongs to the ATPase alpha/beta chains family. F-type ATPases have 2 components, CF(1) - the catalytic core - and CF(0) - the membrane proton channel. CF(1) has five subunits: alpha(3), beta(3), gamma(1), delta(1), epsilon(1). CF(0) has four main subunits: a(1), b(1), b'(1) and c(9-12).

The protein resides in the plastid. It localises to the chloroplast thylakoid membrane. The catalysed reaction is ATP + H2O + 4 H(+)(in) = ADP + phosphate + 5 H(+)(out). Its function is as follows. Produces ATP from ADP in the presence of a proton gradient across the membrane. The catalytic sites are hosted primarily by the beta subunits. In Spinacia oleracea (Spinach), this protein is ATP synthase subunit beta, chloroplastic.